The primary structure comprises 377 residues: Interferon gamma receptor 1 (377 aa).

The N-terminal stretch at 1–23 is a signal peptide; that stretch reads MRTQIYISVTVLILLLKKSDLEA. The Extracellular portion of the chain corresponds to 24–235; it reads VRVPSPESVS…IRRYTPFTVY (212 aa). The 92-residue stretch at 26–117 folds into the Fibronectin type-III domain; sequence VPSPESVSVQ…DFFIFSFNEN (92 aa). Residues Asn-78 and Asn-186 are each glycosylated (N-linked (GlcNAc...) asparagine). The chain crosses the membrane as a helical span at residues 236 to 256; sequence LYPVLGVTLTLLFITGIIILL. At 257–377 the chain is on the cytoplasmic side; that stretch reads EKKCNSEMKK…TVDSYGPRLL (121 aa). The tract at residues 326–377 is disordered; sequence VYSEDKNSYGPNDLVEDEQSDLSDFYDCPHAPKQKREMSPGDTVDSYGPRLL.

Belongs to the type II cytokine receptor family. As to expression, highly expressed in spleen. Also detected in brain, kidney, gill, intestine and heart. Expressed at very low levels in muscle. In immune cell populations, shows highest expression in monocytes, and slightly lower expression in peripheral blood leukocytes, splenocytes, neutrophils and mature macrophages.

The protein localises to the cell membrane. Receptor which shows binding specificity for the cytokine ifng1r (interferon gamma-related). The protein is Interferon gamma receptor 1 of Carassius auratus (Goldfish).